The sequence spans 180 residues: Signal peptidase complex subunit 2 (180 aa).

Residues 1 to 45 are Cytoplasmic-facing; sequence MTDEPVKVVNKWDGPTVKNALDEVVKKILNDKVGWTESHNLMNLR. Residues 46–66 traverse the membrane as a helical segment; the sequence is LLISFIGVAFSAFACGYDYYE. Topologically, residues 67–72 are lumenal; sequence PFPKSK. Residues 73-93 form a helical membrane-spanning segment; the sequence is IVLAVCSVSYFICMGILQMYQ. Residues 94-180 are Cytoplasmic-facing; it reads WYVEKDCIYE…LYNRLIRSEQ (87 aa).

The protein belongs to the SPCS2 family. In terms of assembly, component of the signal peptidase complex (SPC) composed of a catalytic subunit sec-11 and three accessory subunits spcs-1, spcs-2 and spcs-3. The complex induces a local thinning of the ER membrane which is used to measure the length of the signal peptide (SP) h-region of protein substrates. This ensures the selectivity of the complex towards h-regions shorter than 18-20 amino acids.

Its subcellular location is the endoplasmic reticulum membrane. Functionally, component of the signal peptidase complex (SPC) which catalyzes the cleavage of N-terminal signal sequences from nascent proteins as they are translocated into the lumen of the endoplasmic reticulum. Enhances the enzymatic activity of SPC and facilitates the interactions between different components of the translocation site. The protein is Signal peptidase complex subunit 2 of Caenorhabditis elegans.